A 580-amino-acid chain; its full sequence is Probable alpha-1,3-mannosyltransferase MNT4 (580 aa).

Over 1-10 (MVLRIRRIKK) the chain is Cytoplasmic. A helical; Signal-anchor for type II membrane protein transmembrane segment spans residues 11–29 (LAPLIFTSLLSLIVLFRVY). The Lumenal portion of the chain corresponds to 30-580 (RQYPFSDHFE…KVVELWNKVV (551 aa)). N-linked (GlcNAc...) asparagine glycosylation is found at Asn132, Asn167, Asn223, and Asn349.

This sequence belongs to the MNN1/MNT family.

The protein resides in the membrane. This is Probable alpha-1,3-mannosyltransferase MNT4 (MNT4) from Saccharomyces cerevisiae (strain ATCC 204508 / S288c) (Baker's yeast).